Consider the following 132-residue polypeptide: Fatty acid-binding protein, adipocyte (132 aa).

C2 is modified (N-acetylcysteine). A Phosphoserine modification is found at S13. The residue at position 20 (Y20) is a Phosphotyrosine; by Tyr-kinases. The Nuclear localization signal signature appears at 22-32; that stretch reads KEVGVGFATRK. 127–129 is an a fatty acid binding site; the sequence is RVY.

It belongs to the calycin superfamily. Fatty-acid binding protein (FABP) family. As to quaternary structure, monomer. Homodimer. Interacts with PPARG.

The protein resides in the cytoplasm. The protein localises to the nucleus. Its function is as follows. Lipid transport protein in adipocytes. Binds both long chain fatty acids and retinoic acid. Delivers long-chain fatty acids and retinoic acid to their cognate receptors in the nucleus. This Rattus norvegicus (Rat) protein is Fatty acid-binding protein, adipocyte (Fabp4).